The following is a 227-amino-acid chain: Ribosomal RNA large subunit methyltransferase E (227 aa).

Positions 78, 80, 103, 119, and 143 each coordinate S-adenosyl-L-methionine. The active-site Proton acceptor is the lysine 183.

The protein belongs to the class I-like SAM-binding methyltransferase superfamily. RNA methyltransferase RlmE family.

The protein resides in the cytoplasm. The catalysed reaction is uridine(2552) in 23S rRNA + S-adenosyl-L-methionine = 2'-O-methyluridine(2552) in 23S rRNA + S-adenosyl-L-homocysteine + H(+). Its function is as follows. Specifically methylates the uridine in position 2552 of 23S rRNA at the 2'-O position of the ribose in the fully assembled 50S ribosomal subunit. The polypeptide is Ribosomal RNA large subunit methyltransferase E (Rickettsia rickettsii (strain Iowa)).